A 280-amino-acid polypeptide reads, in one-letter code: 2-dehydro-3-deoxyphosphooctonate aldolase (280 aa).

This sequence belongs to the KdsA family.

The protein localises to the cytoplasm. It catalyses the reaction D-arabinose 5-phosphate + phosphoenolpyruvate + H2O = 3-deoxy-alpha-D-manno-2-octulosonate-8-phosphate + phosphate. The protein operates within carbohydrate biosynthesis; 3-deoxy-D-manno-octulosonate biosynthesis; 3-deoxy-D-manno-octulosonate from D-ribulose 5-phosphate: step 2/3. Its pathway is bacterial outer membrane biogenesis; lipopolysaccharide biosynthesis. The protein is 2-dehydro-3-deoxyphosphooctonate aldolase of Coxiella burnetii (strain CbuG_Q212) (Coxiella burnetii (strain Q212)).